The chain runs to 187 residues: Late expression factor 11 (187 aa).

Disordered regions lie at residues Met1 to Asp24 and Gly119 to Gln187.

This sequence belongs to the baculoviridae LEF-11 family.

Its function is as follows. Involved in late/very late gene activation. The sequence is that of Late expression factor 11 (LEF-11) from Lymantria dispar multicapsid nuclear polyhedrosis virus (LdMNPV).